A 156-amino-acid polypeptide reads, in one-letter code: Small ribosomal subunit protein uS7 (156 aa).

Belongs to the universal ribosomal protein uS7 family. In terms of assembly, part of the 30S ribosomal subunit. Contacts proteins S9 and S11.

Its function is as follows. One of the primary rRNA binding proteins, it binds directly to 16S rRNA where it nucleates assembly of the head domain of the 30S subunit. Is located at the subunit interface close to the decoding center, probably blocks exit of the E-site tRNA. The polypeptide is Small ribosomal subunit protein uS7 (Streptococcus pneumoniae (strain Taiwan19F-14)).